The following is a 473-amino-acid chain: ATP synthase subunit beta (473 aa).

153–160 (GGAGVGKT) is a binding site for ATP.

It belongs to the ATPase alpha/beta chains family. In terms of assembly, F-type ATPases have 2 components, CF(1) - the catalytic core - and CF(0) - the membrane proton channel. CF(1) has five subunits: alpha(3), beta(3), gamma(1), delta(1), epsilon(1). CF(0) has three main subunits: a(1), b(2) and c(9-12). The alpha and beta chains form an alternating ring which encloses part of the gamma chain. CF(1) is attached to CF(0) by a central stalk formed by the gamma and epsilon chains, while a peripheral stalk is formed by the delta and b chains.

The protein localises to the cell membrane. The enzyme catalyses ATP + H2O + 4 H(+)(in) = ADP + phosphate + 5 H(+)(out). In terms of biological role, produces ATP from ADP in the presence of a proton gradient across the membrane. The catalytic sites are hosted primarily by the beta subunits. In Rickettsia africae (strain ESF-5), this protein is ATP synthase subunit beta.